A 116-amino-acid polypeptide reads, in one-letter code: Protein Rev (116 aa).

Residues Ser-5 and Ser-8 each carry the phosphoserine; by host CK2 modification. The tract at residues 18–26 (IIKILYQSN) is homomultimerization. Residues 24–49 (QSNPHPSPEGTRQARRNRRRRWRERQ) are disordered. Positions 34-50 (TRQARRNRRRRWRERQR) match the Nuclear localization signal and RNA-binding (RRE) motif. The segment covering 36–47 (QARRNRRRRWRE) has biased composition (basic residues). A Nuclear export signal and binding to XPO1 motif is present at residues 73-84 (LQLPPLDRLTLD). Residues Ser-92 and Ser-99 each carry the phosphoserine; by host modification.

This sequence belongs to the HIV-1 REV protein family. As to quaternary structure, homomultimer; when bound to the RRE. Multimeric assembly is essential for activity and may involve XPO1. Binds to human KPNB1, XPO1, TNPO1, RANBP5 and IPO7. Interacts with the viral Integrase. Interacts with human KHDRBS1. Interacts with human NAP1; this interaction decreases Rev multimerization and stimulates its activity. Interacts with human DEAD-box helicases DDX3 and DDX24; these interactions may serve for viral RNA export to the cytoplasm and packaging, respectively. Interacts with human PSIP1; this interaction may inhibit HIV-1 DNA integration by promoting dissociation of the Integrase-LEDGF/p75 complex. In terms of processing, asymmetrically arginine dimethylated at one site by host PRMT6. Methylation impairs the RNA-binding activity and export of viral RNA from the nucleus to the cytoplasm. Phosphorylated by protein kinase CK2. Presence of, and maybe binding to the N-terminus of the regulatory beta subunit of CK2 is necessary for CK2-mediated Rev's phosphorylation.

The protein resides in the host nucleus. It is found in the host nucleolus. The protein localises to the host cytoplasm. Escorts unspliced or incompletely spliced viral pre-mRNAs (late transcripts) out of the nucleus of infected cells. These pre-mRNAs carry a recognition sequence called Rev responsive element (RRE) located in the env gene, that is not present in fully spliced viral mRNAs (early transcripts). This function is essential since most viral proteins are translated from unspliced or partially spliced pre-mRNAs which cannot exit the nucleus by the pathway used by fully processed cellular mRNAs. Rev itself is translated from a fully spliced mRNA that readily exits the nucleus. Rev's nuclear localization signal (NLS) binds directly to KPNB1/Importin beta-1 without previous binding to KPNA1/Importin alpha-1. KPNB1 binds to the GDP bound form of RAN (Ran-GDP) and targets Rev to the nucleus. In the nucleus, the conversion from Ran-GDP to Ran-GTP dissociates Rev from KPNB1 and allows Rev's binding to the RRE in viral pre-mRNAs. Rev multimerization on the RRE via cooperative assembly exposes its nuclear export signal (NES) to the surface. Rev can then form a complex with XPO1/CRM1 and Ran-GTP, leading to nuclear export of the complex. Conversion from Ran-GTP to Ran-GDP mediates dissociation of the Rev/RRE/XPO1/RAN complex, so that Rev can return to the nucleus for a subsequent round of export. Beside KPNB1, also seems to interact with TNPO1/Transportin-1, RANBP5/IPO5 and IPO7/RANBP7 for nuclear import. The nucleoporin-like HRB/RIP is an essential cofactor that probably indirectly interacts with Rev to release HIV RNAs from the perinuclear region to the cytoplasm. The polypeptide is Protein Rev (Human immunodeficiency virus type 1 group M subtype B (isolate SF33) (HIV-1)).